Reading from the N-terminus, the 429-residue chain is MPAIVIVGAQWGDEGKGKATDLLGGRVDYVVKPNGGNNAGHTVVVNGEKYELKLLPAGILSPNAIPIIGNGCVVNLEALFDEIDALKARGADTSKLRVSANAHLVAPYHQVLDKVTERFLGKRAIGTTGRGIGPAYMDKVARLGIRVQDVFDESILRQKVEGSLAQKNELLVKVYNRRAIDVEEIVAYFLGFAERLQPLVIDSTIELNNALDDGKVVLMEGGQATYLDVDHGTYPFVTSSNPTAGGSSVGSGIGPTRITRVVGIIKAYTTRVGAGPFPTELFDEMGEYLQKTGGEFGVNTGRPRRCGWYDAVLARHAARINGFTDYFVTKLDVLTGIEKIPVCVAYDVDGVRHEEMPMTQTEFHHAKPIFEYLDGWTEDISGAKTLDDLPENARNYVLELEKMSGTRFSAIGVGPDRDQTIVVHDLIDG.

GTP-binding positions include 12–18 (GDEGKGK) and 40–42 (GHT). Asp13 (proton acceptor) is an active-site residue. 2 residues coordinate Mg(2+): Asp13 and Gly40. IMP-binding positions include 13–16 (DEGK), 38–41 (NAGH), Thr128, Arg142, Gln223, Thr238, and Arg302. Residue His41 is the Proton donor of the active site. 298–304 (VNTGRPR) is a substrate binding site. GTP is bound by residues Arg304, 330–332 (KLD), and 412–414 (GVG).

It belongs to the adenylosuccinate synthetase family. In terms of assembly, homodimer. Mg(2+) is required as a cofactor.

The protein resides in the cytoplasm. The enzyme catalyses IMP + L-aspartate + GTP = N(6)-(1,2-dicarboxyethyl)-AMP + GDP + phosphate + 2 H(+). It functions in the pathway purine metabolism; AMP biosynthesis via de novo pathway; AMP from IMP: step 1/2. Its function is as follows. Plays an important role in the de novo pathway of purine nucleotide biosynthesis. Catalyzes the first committed step in the biosynthesis of AMP from IMP. The polypeptide is Adenylosuccinate synthetase (Renibacterium salmoninarum (strain ATCC 33209 / DSM 20767 / JCM 11484 / NBRC 15589 / NCIMB 2235)).